The following is a 171-amino-acid chain: MSNSSLALKQSGLRWLWLALLVFIADITIKLIVMDNMGYGWANRIEVLPFFNLLYVHNYGAAFSFLSDQEGWQRWLFTGIAFVVTGMLAYWMRRLPASDKWNNIAYALIIGGAVGNVFDRIVHGFVVDYLDFYWGTYHWPAFNLADSTICIGAAMIILDGFRAKKSAPSQS.

4 consecutive transmembrane segments (helical) span residues 15–35 (WLWLALLVFIADITIKLIVMD), 47–67 (VLPFFNLLYVHNYGAAFSFLS), 72–92 (WQRWLFTGIAFVVTGMLAYWM), and 107–127 (ALIIGGAVGNVFDRIVHGFVV). Active-site residues include Asp128 and Asp146. Residues 141–161 (AFNLADSTICIGAAMIILDGF) form a helical membrane-spanning segment.

This sequence belongs to the peptidase A8 family.

Its subcellular location is the cell inner membrane. It catalyses the reaction Release of signal peptides from bacterial membrane prolipoproteins. Hydrolyzes -Xaa-Yaa-Zaa-|-(S,diacylglyceryl)Cys-, in which Xaa is hydrophobic (preferably Leu), and Yaa (Ala or Ser) and Zaa (Gly or Ala) have small, neutral side chains.. Its pathway is protein modification; lipoprotein biosynthesis (signal peptide cleavage). In terms of biological role, this protein specifically catalyzes the removal of signal peptides from prolipoproteins. The protein is Lipoprotein signal peptidase of Vibrio cholerae serotype O1 (strain ATCC 39315 / El Tor Inaba N16961).